The chain runs to 514 residues: WD repeat-containing protein 26 (514 aa).

The CTLH domain maps to E9–E84. WD repeat units lie at residues E206–K245, G252–R291, S297–E337, Q377–K416, G419–E461, and G464–N504.

As to quaternary structure, forms homooligomers. Identified in the CTLH complex that contains GID4, RANBP9 and/or RANBP10, MKLN1, MAEA, RMND5A (or alternatively its paralog RMND5B), GID8, ARMC8, WDR26 and YPEL5. Within this complex, MAEA, RMND5A (or alternatively its paralog RMND5B), GID8, WDR26, and RANBP9 and/or RANBP10 form the catalytic core, while GID4, MKLN1, ARMC8 and YPEL5 have ancillary roles. Interacts with DDB1-CUL4A/B E3 ligase complexes. Forms a complex composed of at least WDR26, a G-beta:gamma unit, and PLCB2. Interacts with AXIN1.

It is found in the cytoplasm. It localises to the nucleus. The protein resides in the mitochondrion. Its function is as follows. G-beta-like protein involved in cell signal transduction. Acts as a negative regulator in MAPK signaling pathway. Functions as a scaffolding protein to promote G beta:gamma-mediated PLCB2 plasma membrane translocation and subsequent activation in leukocytes. Core component of the CTLH E3 ubiquitin-protein ligase complex that selectively accepts ubiquitin from UBE2H and mediates ubiquitination and subsequent proteasomal degradation of the transcription factor HBP1. Acts as a negative regulator of the canonical Wnt signaling pathway through preventing ubiquitination of beta-catenin CTNNB1 by the beta-catenin destruction complex, thus negatively regulating CTNNB1 degradation. Protects cells from oxidative stress-induced apoptosis via the down-regulation of AP-1 transcriptional activity as well as by inhibiting cytochrome c release from mitochondria. Also protects cells by promoting hypoxia-mediated autophagy and mitophagy. The sequence is that of WD repeat-containing protein 26 (Wdr26) from Rattus norvegicus (Rat).